We begin with the raw amino-acid sequence, 184 residues long: Ribosome-recycling factor (184 aa).

It belongs to the RRF family.

Its subcellular location is the cytoplasm. Functionally, responsible for the release of ribosomes from messenger RNA at the termination of protein biosynthesis. May increase the efficiency of translation by recycling ribosomes from one round of translation to another. This is Ribosome-recycling factor from Fervidobacterium nodosum (strain ATCC 35602 / DSM 5306 / Rt17-B1).